A 276-amino-acid chain; its full sequence is tRNA dimethylallyltransferase (276 aa).

Positions 9 to 12 are interaction with substrate tRNA; the sequence is DSLS.

The protein belongs to the IPP transferase family. As to quaternary structure, monomer. Mg(2+) serves as cofactor.

The catalysed reaction is adenosine(37) in tRNA + dimethylallyl diphosphate = N(6)-dimethylallyladenosine(37) in tRNA + diphosphate. Catalyzes the transfer of a dimethylallyl group onto the adenine at position 37 in tRNAs that read codons beginning with uridine, leading to the formation of N6-(dimethylallyl)adenosine (i(6)A). The protein is tRNA dimethylallyltransferase (miaA) of Helicobacter pylori (strain G27).